A 993-amino-acid chain; its full sequence is MATSSFNINELVASHGDKGLLATALVDKTAHEQLEEQLQHQRRGRKVYIRNVLGVKDSEVIRNRYGGKYDLHLTQQEFAPHGLAGALRLCETLDCLDSFPSSGLRQDLVLDFGGSWVTHYLRGHNVHCCSPCLGIRDKMRHAERLMNMRKIILNDPQQFDGRQPDFCTHPAADCKVQAHFAISIHGGYDMGFRGLCEAMNAHGTTILKGTMMFDGAMMFDDQGVIPELNCQWRKIRTAFSETEDATPLSEKLNSTIFSHVRKFKTMVAFDFINESTMSYVHDWENIKSFLTDQTYSYRGMTYGIERCVIHAGIMTYKIIGVPGMCPPELIRHCIWFPSIKDYVGLKIPASQDLVEWKTVRILTSTLRETEEIAMRCYNDKKAWMEQFKVILGVLSAKSSTIVINGMSMQSGERIDINDYHYIGFAILLHTKMKYEQLGKMYDMWNASYISKWFAALTRPLRVFFSSVVHALFPTLRPREEKEFLIKLSTFVTFNVECSFDGGEEWDVISSAAYVATQAVTDGKVLAAQKAEKLAEKLAQPVIEVSDRPEAPSSTPDDTADVCGKEQEVSELDSLSAQTRSPITRVAERATAMLEYAAYEKQLHDTTVSNLKRIWNMAGGDDKRNSLEGNLKFVFDTYFTVDPMVNIHFSTGRWMRPVPEGIVYSVGFNERGLGPKSDGELYIVNSECVICNSESLSTVTRSLQAPTGTISQVDGVAGCGKTTAIKSIFEPSTDMIVTANKKSAQDVRMALFKSSDSKEACTFVRTADSVLLNECPTVSRVLVDEVVLLHFGQLCAVMSKLKAVRAICFGDSEQIAFSSRDASFDMRFSKIIPDETSDADTTFRSPQDVVPLVRLMATKALPKGTHSKYTKWVSQSKVKRSVTSRAIASVTLVDLDSSRFYITMTQADKASLISRAKEMNLPKTFWNERIKTVHESQGISEDHVTLVRLKSTKCDLFKQFSYCLVALTRHKVTFRYEHCGVLNGDLIAECIARA.

The methyltransferase stretch occupies residues 51 to 409 (NVLGVKDSEV…TIVINGMSMQ (359 aa)). One can recognise an Alphavirus-like MT domain in the interval 72 to 290 (HLTQQEFAPH…HDWENIKSFL (219 aa)). A disordered region spans residues 545 to 576 (SDRPEAPSSTPDDTADVCGKEQEVSELDSLSA). Residues 687 to 838 (CVICNSESLS…KIIPDETSDA (152 aa)) form the (+)RNA virus helicase ATP-binding domain. Residues 712–975 (VDGVAGCGKT…LTRHKVTFRY (264 aa)) form an ATP-dependent helicase region. Position 714 to 721 (714 to 721 (GVAGCGKT)) interacts with ATP. Residues 839 to 993 (DTTFRSPQDV…DLIAECIARA (155 aa)) enclose the (+)RNA virus helicase C-terminal domain.

It belongs to the bromoviridae replication protein 1a family. Interacts with RNA-directed RNA polymerase 2a.

It localises to the host endoplasmic reticulum membrane. Its function is as follows. Involved in the virus replication. Contains a helicase domain and a methyltransferase domain. The methyltransferase domain is probably involved in viral RNA capping. Involved in the formation of ER membrane spherular invaginations in which RNA replication complexes form. The polypeptide is Replication protein 1a (Cucumis sativus (Cucumber)).